A 1394-amino-acid chain; its full sequence is DNA-directed RNA polymerase subunit beta' (1394 aa).

Zn(2+)-binding residues include Cys70, Cys72, Cys85, and Cys88. Residues Asp470, Asp472, and Asp474 each coordinate Mg(2+). Positions 815, 889, 896, and 899 each coordinate Zn(2+).

It belongs to the RNA polymerase beta' chain family. The RNAP catalytic core consists of 2 alpha, 1 beta, 1 beta' and 1 omega subunit. When a sigma factor is associated with the core the holoenzyme is formed, which can initiate transcription. It depends on Mg(2+) as a cofactor. The cofactor is Zn(2+).

It catalyses the reaction RNA(n) + a ribonucleoside 5'-triphosphate = RNA(n+1) + diphosphate. Functionally, DNA-dependent RNA polymerase catalyzes the transcription of DNA into RNA using the four ribonucleoside triphosphates as substrates. The protein is DNA-directed RNA polymerase subunit beta' of Anaeromyxobacter dehalogenans (strain 2CP-C).